Reading from the N-terminus, the 117-residue chain is Large ribosomal subunit protein bL20 (117 aa).

Belongs to the bacterial ribosomal protein bL20 family.

In terms of biological role, binds directly to 23S ribosomal RNA and is necessary for the in vitro assembly process of the 50S ribosomal subunit. It is not involved in the protein synthesizing functions of that subunit. This Chromohalobacter salexigens (strain ATCC BAA-138 / DSM 3043 / CIP 106854 / NCIMB 13768 / 1H11) protein is Large ribosomal subunit protein bL20.